A 246-amino-acid polypeptide reads, in one-letter code: 1-(5-phosphoribosyl)-5-[(5-phosphoribosylamino)methylideneamino] imidazole-4-carboxamide isomerase (246 aa).

Asp-12 (proton acceptor) is an active-site residue. Asp-134 acts as the Proton donor in catalysis.

The protein belongs to the HisA/HisF family.

The protein localises to the cytoplasm. It catalyses the reaction 1-(5-phospho-beta-D-ribosyl)-5-[(5-phospho-beta-D-ribosylamino)methylideneamino]imidazole-4-carboxamide = 5-[(5-phospho-1-deoxy-D-ribulos-1-ylimino)methylamino]-1-(5-phospho-beta-D-ribosyl)imidazole-4-carboxamide. Its pathway is amino-acid biosynthesis; L-histidine biosynthesis; L-histidine from 5-phospho-alpha-D-ribose 1-diphosphate: step 4/9. The protein is 1-(5-phosphoribosyl)-5-[(5-phosphoribosylamino)methylideneamino] imidazole-4-carboxamide isomerase of Psychrobacter cryohalolentis (strain ATCC BAA-1226 / DSM 17306 / VKM B-2378 / K5).